Consider the following 201-residue polypeptide: Lipoprotein signal peptidase (201 aa).

A run of 2 helical transmembrane segments spans residues 73–93 (SNAI…YLMI) and 97–117 (TIGS…NLID). Residues Asp126 and Asp144 contribute to the active site. Residues 135–155 (YSFPVFNLADCFIIIGVIILI) traverse the membrane as a helical segment.

It belongs to the peptidase A8 family.

The protein localises to the cell inner membrane. It carries out the reaction Release of signal peptides from bacterial membrane prolipoproteins. Hydrolyzes -Xaa-Yaa-Zaa-|-(S,diacylglyceryl)Cys-, in which Xaa is hydrophobic (preferably Leu), and Yaa (Ala or Ser) and Zaa (Gly or Ala) have small, neutral side chains.. Its pathway is protein modification; lipoprotein biosynthesis (signal peptide cleavage). In terms of biological role, this protein specifically catalyzes the removal of signal peptides from prolipoproteins. The chain is Lipoprotein signal peptidase from Rickettsia conorii (strain ATCC VR-613 / Malish 7).